The primary structure comprises 554 residues: Phosphoglucomutase (554 aa).

Arg21 is a binding site for alpha-D-glucose 1,6-bisphosphate. Position 111 is a phosphothreonine (Thr111). Ser113 serves as a coordination point for alpha-D-glucose 1,6-bisphosphate. Ser113 acts as the Phosphoserine intermediate in catalysis. 4 residues coordinate Mg(2+): Ser113, Asp278, Asp280, and Asp282. A Phosphoserine modification is found at Ser113. Residues Asp282, Arg283, Thr346, Glu365, Ser367, and Lys378 each coordinate alpha-D-glucose 1,6-bisphosphate.

The protein belongs to the phosphohexose mutase family. Monomer. It depends on Mg(2+) as a cofactor.

It localises to the cytoplasm. The protein localises to the nucleus. It catalyses the reaction alpha-D-glucose 1-phosphate = alpha-D-glucose 6-phosphate. It carries out the reaction O-phospho-L-seryl-[protein] + alpha-D-glucose 1-phosphate = alpha-D-glucose 1,6-bisphosphate + L-seryl-[protein]. The catalysed reaction is alpha-D-glucose 1,6-bisphosphate + L-seryl-[protein] = O-phospho-L-seryl-[protein] + alpha-D-glucose 6-phosphate. Catalyzes the reversible isomerization of alpha-D-glucose 1-phosphate to alpha-D-glucose 6-phosphate. The mechanism proceeds via the intermediate compound alpha-D-glucose 1,6-bisphosphate. Key enzyme in hexose metabolism. The reverse reaction is an essential step for biosynthesis because glucose 1-phosphate is the starting point for the synthesis of UDP-glucose, which acts as a precursor for the synthesis of oligosaccharides and trehalose. This Schizosaccharomyces pombe (strain 972 / ATCC 24843) (Fission yeast) protein is Phosphoglucomutase.